The sequence spans 120 residues: Large ribosomal subunit protein uL22 (120 aa).

It belongs to the universal ribosomal protein uL22 family. Part of the 50S ribosomal subunit.

Functionally, this protein binds specifically to 23S rRNA; its binding is stimulated by other ribosomal proteins, e.g. L4, L17, and L20. It is important during the early stages of 50S assembly. It makes multiple contacts with different domains of the 23S rRNA in the assembled 50S subunit and ribosome. In terms of biological role, the globular domain of the protein is located near the polypeptide exit tunnel on the outside of the subunit, while an extended beta-hairpin is found that lines the wall of the exit tunnel in the center of the 70S ribosome. In Corynebacterium efficiens (strain DSM 44549 / YS-314 / AJ 12310 / JCM 11189 / NBRC 100395), this protein is Large ribosomal subunit protein uL22.